The following is a 319-amino-acid chain: ATP-dependent 6-phosphofructokinase (319 aa).

G11 contributes to the ATP binding site. R21 to R25 contributes to the ADP binding site. Residues R72–C73 and G102–S105 each bind ATP. D103 is a binding site for Mg(2+). T125–D127 is a binding site for substrate. D127 (proton acceptor) is an active-site residue. Residue R154 coordinates ADP. Substrate-binding positions include R162 and M169 to R171. ADP contacts are provided by residues G185–E187, R211, and K213–H215. Residues E222, R243, and H249–R252 each bind substrate.

It belongs to the phosphofructokinase type A (PFKA) family. ATP-dependent PFK group I subfamily. Prokaryotic clade 'B1' sub-subfamily. Homotetramer. Component of a possible RNA degradosome complex composed of rny, rnjA, rnjB, pnp, pfkA and eno (although rnjA and rnjB's presence is unclear). Specifically interacts with RNase Y (rny, PubMed:21803996) and enolase (eno, PubMed:22198292). Interacts with BrxC. The cofactor is Mg(2+).

Its subcellular location is the cytoplasm. It carries out the reaction beta-D-fructose 6-phosphate + ATP = beta-D-fructose 1,6-bisphosphate + ADP + H(+). Its pathway is carbohydrate degradation; glycolysis; D-glyceraldehyde 3-phosphate and glycerone phosphate from D-glucose: step 3/4. Its activity is regulated as follows. Allosterically activated by ADP and other diphosphonucleosides, and allosterically inhibited by phosphoenolpyruvate. Its function is as follows. Catalyzes the phosphorylation of D-fructose 6-phosphate to fructose 1,6-bisphosphate by ATP, the first committing step of glycolysis. The protein is ATP-dependent 6-phosphofructokinase of Bacillus subtilis (strain 168).